The sequence spans 294 residues: Cyclin-G1 (294 aa).

This sequence belongs to the cyclin family. Cyclin G subfamily.

Its subcellular location is the nucleus. May play a role in growth regulation. Is associated with G2/M phase arrest in response to DNA damage. May be an intermediate by which p53 mediates its role as an inhibitor of cellular proliferation. This chain is Cyclin-G1 (Ccng1), found in Rattus norvegicus (Rat).